The sequence spans 433 residues: 3-phosphoshikimate 1-carboxyvinyltransferase (433 aa).

3 residues coordinate 3-phosphoshikimate: Lys-23, Ser-24, and Arg-28. Lys-23 is a phosphoenolpyruvate binding site. Positions 95 and 123 each coordinate phosphoenolpyruvate. 3-phosphoshikimate-binding residues include Ser-170, Ser-171, Gln-172, Ser-198, Asp-317, and Lys-344. Gln-172 contacts phosphoenolpyruvate. Asp-317 (proton acceptor) is an active-site residue. Residues Arg-348, Arg-391, and Lys-416 each coordinate phosphoenolpyruvate.

The protein belongs to the EPSP synthase family. In terms of assembly, monomer.

The protein resides in the cytoplasm. The catalysed reaction is 3-phosphoshikimate + phosphoenolpyruvate = 5-O-(1-carboxyvinyl)-3-phosphoshikimate + phosphate. The protein operates within metabolic intermediate biosynthesis; chorismate biosynthesis; chorismate from D-erythrose 4-phosphate and phosphoenolpyruvate: step 6/7. Functionally, catalyzes the transfer of the enolpyruvyl moiety of phosphoenolpyruvate (PEP) to the 5-hydroxyl of shikimate-3-phosphate (S3P) to produce enolpyruvyl shikimate-3-phosphate and inorganic phosphate. This chain is 3-phosphoshikimate 1-carboxyvinyltransferase, found in Neisseria gonorrhoeae (strain NCCP11945).